We begin with the raw amino-acid sequence, 559 residues long: MWTNFFKLRLFCCLLAVLMVVVLVINVTQVEYLDHETVSATFIDSSGQFVSSQVTGISRNPYCGYDQQTLSSQERMEEDSLLAALHRQVPDVGPVPFVKSTDPSSSYFVILNSAAFFKVGSQLEVLVHVQDFQRKPKKYGGDYLQARIHSLKLQAGAVGRVVDYQNGFYKVFFTLLWPGKVKVSVSLVHPSEGIRVLQRLQEDKPDRVYFKSLFRSGRISETTECNVCLPGNLPLCNFTDLYTGEPWFCFKPKKLPCSSRITHFKGGYLKGLLTAAESAFFQSGVNIKMPVNSSGPDWVTVIPRRIKETNSLELSQGSGTFPSGYYYKDQWRPRKFKMRQFNDPDNITECLQRKVVHLFGDSTIRQWFEYLTTFVPDLVEFNLGSPKNVGPFLAVDQKHNILLKYRCHGPPIRFTTVFSNELHYVANELNGIVGGKNTVVAIAVWSHFSTFPLEVYIRRLRNIRRAVVRLLDRSPKTVVVIRTANAQELGPEVSLFNSDWYNFQLDTILRRMFSGVGVYLVDAWEMTLAHYLPHKLHPDEVIVKNQLDMFLSFVCPLET.

An N-terminal signal peptide occupies residues 1-30 (MWTNFFKLRLFCCLLAVLMVVVLVINVTQV). Asn237, Asn292, and Asn346 each carry an N-linked (GlcNAc...) asparagine glycan.

This sequence belongs to the NXPE family.

It is found in the secreted. This is NXPE family member 3 (NXPE3) from Homo sapiens (Human).